The following is a 332-amino-acid chain: Fructose-1,6-bisphosphatase class 1 (332 aa).

Mg(2+)-binding residues include glutamate 91, aspartate 112, leucine 114, and aspartate 115. Residues 115–118 (DGSS), asparagine 208, tyrosine 241, and lysine 271 contribute to the substrate site. Residue glutamate 277 coordinates Mg(2+).

The protein belongs to the FBPase class 1 family. As to quaternary structure, homotetramer. Mg(2+) is required as a cofactor.

Its subcellular location is the cytoplasm. It catalyses the reaction beta-D-fructose 1,6-bisphosphate + H2O = beta-D-fructose 6-phosphate + phosphate. It functions in the pathway carbohydrate biosynthesis; Calvin cycle. This chain is Fructose-1,6-bisphosphatase class 1, found in Chlorobium phaeobacteroides (strain DSM 266 / SMG 266 / 2430).